The chain runs to 335 residues: Deoxyhypusine hydroxylase (335 aa).

HEAT-like PBS-type repeat units follow at residues 71–97, 104–130, 200–233, 238–264, and 271–298; these read LKHELAYCLGQTRNPASLPFLQQVAKD, CRHEAAEALGALGYEDSLEILKALRDN, LRYRAMFALRDLASPPDLPTATRAVEALAKGLKD, FRHEIAFVFGQLCHPASIPSLTEALSN, and VRHEAAEALGSLGDYEGVEETLRKFLND. Residues histidine 73, glutamate 74, histidine 106, and glutamate 107 each contribute to the Fe cation site. Fe cation-binding residues include histidine 240, glutamate 241, histidine 273, and glutamate 274.

Belongs to the deoxyhypusine hydroxylase family. Fe(2+) is required as a cofactor.

The protein resides in the cytoplasm. It localises to the nucleus. It catalyses the reaction [eIF5A protein]-deoxyhypusine + AH2 + O2 = [eIF5A protein]-hypusine + A + H2O. It functions in the pathway protein modification; eIF5A hypusination. Its function is as follows. Catalyzes the hydroxylation of the N(6)-(4-aminobutyl)-L-lysine intermediate to form hypusine, an essential post-translational modification only found in mature eIF-5A factor. The sequence is that of Deoxyhypusine hydroxylase (lia1) from Aspergillus fumigatus (strain ATCC MYA-4609 / CBS 101355 / FGSC A1100 / Af293) (Neosartorya fumigata).